Here is an 880-residue protein sequence, read N- to C-terminus: Leucine--tRNA ligase (880 aa).

A 'HIGH' region motif is present at residues 46-56 (PYPSGALHMGH). Residues 638–642 (KMSKS) carry the 'KMSKS' region motif. ATP is bound at residue lysine 641.

Belongs to the class-I aminoacyl-tRNA synthetase family.

The protein resides in the cytoplasm. It catalyses the reaction tRNA(Leu) + L-leucine + ATP = L-leucyl-tRNA(Leu) + AMP + diphosphate. The protein is Leucine--tRNA ligase of Xanthomonas axonopodis pv. citri (strain 306).